We begin with the raw amino-acid sequence, 195 residues long: MNITKAELVISAVKPEQYPDSGRPEVALAGRSNVGKSSFINKMINRKNLARTSSKPGKTQTLNFYLINDSFYFVDVPGYGFARVSKQERQKWGKMMETYFTTRETLKAALLLVDLRHPPTKDDVMMYEFFKHYEIPVIVIATKADKVPRGKQQKHAKIARETLRLAAGDSLILFSSETGQGKEEAWAALLPFLTE.

The EngB-type G domain maps to 22–195 (GRPEVALAGR…WAALLPFLTE (174 aa)). Residues 30–37 (GRSNVGKS), 57–61 (GKTQT), 75–78 (DVPG), 142–145 (TKAD), and 174–176 (FSS) each bind GTP. Mg(2+) contacts are provided by Ser-37 and Thr-59.

It belongs to the TRAFAC class TrmE-Era-EngA-EngB-Septin-like GTPase superfamily. EngB GTPase family. Mg(2+) serves as cofactor.

Functionally, necessary for normal cell division and for the maintenance of normal septation. This Geobacillus thermodenitrificans (strain NG80-2) protein is Probable GTP-binding protein EngB.